The sequence spans 139 residues: GSK3B-interacting protein (139 aa).

The interval valine 41–leucine 45 is required for PRKAR2A interaction; contributes to a protective effect against H(2)O(2)-induced apoptosis. An interaction with GSK3B and acts as a GSK3B inhibitor region spans residues serine 115 to serine 139.

Belongs to the GSKIP family. Forms a complex composed of PRKAR2A or PRKAR2B, GSK3B and GSKIP through GSKIP interaction; facilitates PKA-induced phosphorylation of GSK3B leading to GSK3B inactivation; recruits DNM1L through GSK3B for PKA-mediated phosphorylation of DNM1L; promotes beta-catenin degradation through GSK3B-induced phosphorylation of beta-catenin; stabilizes beta-catenin and enhances Wnt-induced signaling through PKA-induced phosphorylation of beta-catenin. Interacts with GSK3B; induces GSK3B-mediated phosphorylation of GSKIP and inhibits GSK3B kinase activity. Phosphorylated by GSK3B.

It localises to the cytoplasm. It is found in the nucleus. Functionally, A-kinase anchoring protein for GSK3B and PKA that regulates or facilitates their kinase activity towards their targets. The ternary complex enhances Wnt-induced signaling by facilitating the GSK3B- and PKA-induced phosphorylation of beta-catenin leading to beta-catenin degradation and stabilization respectively. Upon cAMP activation, the ternary complex contributes to neuroprotection against oxidative stress-induced apoptosis by facilitating the PKA-induced phosphorylation of DML1 and PKA-induced inactivation of GSK3B. During neurite outgrowth promotes neuron proliferation; while increases beta-catenin-induced transcriptional activity through GSK3B kinase activity inhibition, reduces N-cadherin level to promote cell cycle progression. May play a role in cleft palate formation and is required for postnatal life through modulation of the activity of GSK3B during development. The protein is GSK3B-interacting protein of Bos taurus (Bovine).